A 268-amino-acid polypeptide reads, in one-letter code: uncharacterized protein (268 aa).

Residues 132 to 159 are a coiled coil; the sequence is DELDEKIIEFDTKMNEILEELLEDVEVE.

This is an uncharacterized protein from Methanocaldococcus jannaschii (strain ATCC 43067 / DSM 2661 / JAL-1 / JCM 10045 / NBRC 100440) (Methanococcus jannaschii).